The sequence spans 325 residues: tRNA uridine(34) hydroxylase (325 aa).

The Rhodanese domain occupies 122 to 218; it reads EENRCLVLDV…YGQAMGTGKW (97 aa). The active-site Cysteine persulfide intermediate is C178.

The protein belongs to the TrhO family.

The enzyme catalyses uridine(34) in tRNA + AH2 + O2 = 5-hydroxyuridine(34) in tRNA + A + H2O. Its function is as follows. Catalyzes oxygen-dependent 5-hydroxyuridine (ho5U) modification at position 34 in tRNAs. This chain is tRNA uridine(34) hydroxylase, found in Chlamydia felis (strain Fe/C-56) (Chlamydophila felis).